The chain runs to 298 residues: uncharacterized protein (298 aa).

An HTH lysR-type domain is found at threonine 5–threonine 62. A DNA-binding region (H-T-H motif) is located at residues phenylalanine 22–arginine 42.

This sequence belongs to the LysR transcriptional regulatory family.

This is an uncharacterized protein from Sinorhizobium fredii (strain NBRC 101917 / NGR234).